The primary structure comprises 256 residues: Thyroid transcription factor 1-associated protein 26 homolog (256 aa).

2 disordered regions span residues 1–35 (MAPF…AKRK) and 72–190 (RKER…KQEY). Residues 89 to 104 (YPEHLKHLYLAERERL) are compositionally biased toward basic and acidic residues. The span at 136 to 185 (LGSSSSEKNITNTSTDQTIAPASSNEPAQPESSHKTTFFQRKQNISSYQK) shows a compositional bias: polar residues.

This sequence belongs to the TAP26 family.

This Danio rerio (Zebrafish) protein is Thyroid transcription factor 1-associated protein 26 homolog (ccdc59).